Here is a 553-residue protein sequence, read N- to C-terminus: Transcription factor GAMYB (553 aa).

Residues 1–17 (MYRVKSESDCDMIHQEQ) are compositionally biased toward basic and acidic residues. The segment at 1–45 (MYRVKSESDCDMIHQEQMDSPVADDGSSGGSPHRGGGPPLKKGPW) is disordered. The segment covering 27–38 (SSGGSPHRGGGP) has biased composition (gly residues). HTH myb-type domains lie at 37–89 (GPPL…ANHL) and 90–144 (RPNL…KRCQ). 2 DNA-binding regions (H-T-H motif) span residues 65–89 (WNAVQKNTGLFRCGKSCRLRWANHL) and 117–140 (WARMAAHLPGRTDNEIKNYWNTRI). Residues 464-489 (PAQSTSMGSGEQVMGPKYEPGDTSPH) form a disordered region.

Interacts with MYBS1. In terms of tissue distribution, expressed in aleurone cells, inflorescence shoot apical region, stamen primordia, and tapetum cells of the anther. Expressed at low level in roots and vegetative shoots.

It is found in the nucleus. Its function is as follows. Transcriptional activator of gibberellin-dependent alpha-amylase expression in aleurone cells. Involved in pollen and floral organs development. May bind to the 5'-TAACAAA-3' box of alpha-amylase promoter. Required for anther development. Functions in parallel with UDT1 to regulate early anther development. Functions upstream of the transcription factor TDR and may positively regulate its transcription. Required for pollen development. Probably required for controlling tapetal cell size and promoting tapetal programmed cell death (PCD) during anther development. Required for exine and Ubisch body formation in anthers. Interacts with the DNA specific motifs of giberrellin-up-regulated genes of anthers and regulates their expression. Positively regulates the expression of the laurate hydroxylase CYP703A3, known to be essential for the development of pollen exine and anther epicuticular layer. Functions with MYBS1 to integrate diverse nutrient starvation and gibberellin (GA) signaling pathways during germination of grains. Sugar, nitrogen and phosphate starvation signals converge and interconnect with GA to promote the co-nuclear import of GAMYB and MYBS1, resulting in the expression of a large set of GA-inducible hydrolases, transporters and regulators that are essential for mobilization of nutrient reserves in the endosperm to support seedling growth. This is Transcription factor GAMYB from Oryza sativa subsp. japonica (Rice).